Here is a 465-residue protein sequence, read N- to C-terminus: ATP synthase subunit beta (465 aa).

An ATP-binding site is contributed by 148-155; that stretch reads GGAGVGKT.

Belongs to the ATPase alpha/beta chains family. As to quaternary structure, F-type ATPases have 2 components, CF(1) - the catalytic core - and CF(0) - the membrane proton channel. CF(1) has five subunits: alpha(3), beta(3), gamma(1), delta(1), epsilon(1). CF(0) has three main subunits: a(1), b(2) and c(9-12). The alpha and beta chains form an alternating ring which encloses part of the gamma chain. CF(1) is attached to CF(0) by a central stalk formed by the gamma and epsilon chains, while a peripheral stalk is formed by the delta and b chains.

It localises to the cell inner membrane. It catalyses the reaction ATP + H2O + 4 H(+)(in) = ADP + phosphate + 5 H(+)(out). In terms of biological role, produces ATP from ADP in the presence of a proton gradient across the membrane. The catalytic sites are hosted primarily by the beta subunits. The protein is ATP synthase subunit beta of Neisseria meningitidis serogroup A / serotype 4A (strain DSM 15465 / Z2491).